A 603-amino-acid polypeptide reads, in one-letter code: Proline--tRNA ligase (603 aa).

The protein belongs to the class-II aminoacyl-tRNA synthetase family. ProS type 1 subfamily. Homodimer.

The protein localises to the cytoplasm. The enzyme catalyses tRNA(Pro) + L-proline + ATP = L-prolyl-tRNA(Pro) + AMP + diphosphate. In terms of biological role, catalyzes the attachment of proline to tRNA(Pro) in a two-step reaction: proline is first activated by ATP to form Pro-AMP and then transferred to the acceptor end of tRNA(Pro). As ProRS can inadvertently accommodate and process non-cognate amino acids such as alanine and cysteine, to avoid such errors it has two additional distinct editing activities against alanine. One activity is designated as 'pretransfer' editing and involves the tRNA(Pro)-independent hydrolysis of activated Ala-AMP. The other activity is designated 'posttransfer' editing and involves deacylation of mischarged Ala-tRNA(Pro). The misacylated Cys-tRNA(Pro) is not edited by ProRS. The polypeptide is Proline--tRNA ligase (Arthrobacter sp. (strain FB24)).